A 563-amino-acid chain; its full sequence is Phosphomethylpyrimidine synthase (563 aa).

Substrate contacts are provided by residues asparagine 180, methionine 209, tyrosine 238, histidine 274, 294–296 (SRG), 335–338 (DGLR), and glutamate 374. Histidine 378 contacts Zn(2+). Residue tyrosine 401 coordinates substrate. Residue histidine 442 coordinates Zn(2+). Residues cysteine 522, cysteine 525, and cysteine 530 each coordinate [4Fe-4S] cluster.

It belongs to the ThiC family. [4Fe-4S] cluster serves as cofactor.

The catalysed reaction is 5-amino-1-(5-phospho-beta-D-ribosyl)imidazole + S-adenosyl-L-methionine = 4-amino-2-methyl-5-(phosphooxymethyl)pyrimidine + CO + 5'-deoxyadenosine + formate + L-methionine + 3 H(+). It functions in the pathway cofactor biosynthesis; thiamine diphosphate biosynthesis. Functionally, catalyzes the synthesis of the hydroxymethylpyrimidine phosphate (HMP-P) moiety of thiamine from aminoimidazole ribotide (AIR) in a radical S-adenosyl-L-methionine (SAM)-dependent reaction. This chain is Phosphomethylpyrimidine synthase, found in Geobacillus thermodenitrificans (strain NG80-2).